The primary structure comprises 593 residues: NADH-quinone oxidoreductase subunit C/D (593 aa).

Residues 1-184 form an NADH dehydrogenase I subunit C region; the sequence is MTADNALYIP…DPYSLTLAKQ (184 aa). The tract at residues 208–593 is NADH dehydrogenase I subunit D; the sequence is DYMFLNLGPN…IDFVMADVDR (386 aa).

It in the N-terminal section; belongs to the complex I 30 kDa subunit family. The protein in the C-terminal section; belongs to the complex I 49 kDa subunit family. NDH-1 is composed of 13 different subunits. Subunits NuoB, CD, E, F, and G constitute the peripheral sector of the complex.

Its subcellular location is the cell inner membrane. It catalyses the reaction a quinone + NADH + 5 H(+)(in) = a quinol + NAD(+) + 4 H(+)(out). Functionally, NDH-1 shuttles electrons from NADH, via FMN and iron-sulfur (Fe-S) centers, to quinones in the respiratory chain. The immediate electron acceptor for the enzyme in this species is believed to be ubiquinone. Couples the redox reaction to proton translocation (for every two electrons transferred, four hydrogen ions are translocated across the cytoplasmic membrane), and thus conserves the redox energy in a proton gradient. This chain is NADH-quinone oxidoreductase subunit C/D, found in Pseudomonas syringae pv. syringae (strain B728a).